We begin with the raw amino-acid sequence, 1039 residues long: Translation initiation factor IF-2 (1039 aa).

Disordered regions lie at residues 39 to 347 and 400 to 452; these read TISE…KWQE and ARPP…PEKV. Positions 103 to 125 are enriched in polar residues; the sequence is RNTTSNAPEASVANNQIASSEAN. A compositionally biased stretch (low complexity) spans 157-176; that stretch reads PQKPAAPEAEPEAQSQAPAK. Basic and acidic residues-rich tracts occupy residues 178 to 197 and 226 to 243; these read AVEK…ERQP and PILK…DQAK. Residues 408 to 423 show a composition bias toward low complexity; sequence ARSASAATAAPISSPT. Residues 432-451 are compositionally biased toward basic and acidic residues; the sequence is NNRDQNRRQETEVKRERPEK. The region spanning 533 to 706 is the tr-type G domain; it reads RRPPVVTIMG…LLVAEVGELS (174 aa). The segment at 542 to 549 is G1; the sequence is GHVDHGKT. Residue 542-549 coordinates GTP; sequence GHVDHGKT. A G2 region spans residues 567–571; the sequence is GITQH. Positions 592 to 595 are G3; sequence DTPG. GTP-binding positions include 592–596 and 646–649; these read DTPGH and NKID. The segment at 646-649 is G4; sequence NKID. The tract at residues 682 to 684 is G5; that stretch reads SAI.

The protein belongs to the TRAFAC class translation factor GTPase superfamily. Classic translation factor GTPase family. IF-2 subfamily.

The protein resides in the cytoplasm. In terms of biological role, one of the essential components for the initiation of protein synthesis. Protects formylmethionyl-tRNA from spontaneous hydrolysis and promotes its binding to the 30S ribosomal subunits. Also involved in the hydrolysis of GTP during the formation of the 70S ribosomal complex. The protein is Translation initiation factor IF-2 of Nostoc sp. (strain PCC 7120 / SAG 25.82 / UTEX 2576).